Consider the following 70-residue polypeptide: Small ribosomal subunit protein bS21 (70 aa).

It belongs to the bacterial ribosomal protein bS21 family.

The protein is Small ribosomal subunit protein bS21 of Methylibium petroleiphilum (strain ATCC BAA-1232 / LMG 22953 / PM1).